The chain runs to 337 residues: Anthranilate phosphoribosyltransferase (337 aa).

5-phospho-alpha-D-ribose 1-diphosphate contacts are provided by residues glycine 82, 85–86, threonine 90, 92–95, 110–118, and serine 122; these read GD, NIST, and KHGGRSVSS. Glycine 82 is a binding site for anthranilate. Serine 94 is a Mg(2+) binding site. Arginine 168 provides a ligand contact to anthranilate. Residues aspartate 226 and glutamate 227 each contribute to the Mg(2+) site.

Belongs to the anthranilate phosphoribosyltransferase family. As to quaternary structure, homodimer. Mg(2+) is required as a cofactor.

It catalyses the reaction N-(5-phospho-beta-D-ribosyl)anthranilate + diphosphate = 5-phospho-alpha-D-ribose 1-diphosphate + anthranilate. The protein operates within amino-acid biosynthesis; L-tryptophan biosynthesis; L-tryptophan from chorismate: step 2/5. In terms of biological role, catalyzes the transfer of the phosphoribosyl group of 5-phosphorylribose-1-pyrophosphate (PRPP) to anthranilate to yield N-(5'-phosphoribosyl)-anthranilate (PRA). The polypeptide is Anthranilate phosphoribosyltransferase (Francisella tularensis subsp. mediasiatica (strain FSC147)).